Reading from the N-terminus, the 400-residue chain is Hyaluronan and proteoglycan link protein 4 (400 aa).

Residues 1 to 30 form the signal peptide; that stretch reads MACAPGALGHRALWAVAWGLLLLVPVLAGA. In terms of domain architecture, Ig-like C2-type spans 47-155; it reads SVVVQTAPGQ…VTNELEDDVG (109 aa). Cystine bridges form between Cys-69–Cys-144, Cys-186–Cys-264, Cys-210–Cys-231, Cys-291–Cys-361, and Cys-316–Cys-337. Residue Asn-133 is glycosylated (N-linked (GlcNAc...) asparagine). Link domains are found at residues 164–266 and 271–363; these read VVFP…FCFT and GRVF…YCYR.

It belongs to the HAPLN family. Expressed predominantly in brain where it is found mainly throughout the midbrain and hindbrain in a perineuronal net pattern.

It is found in the secreted. The protein localises to the extracellular space. It localises to the extracellular matrix. Functionally, essential for the proper localization of brevican (BCAN), mainly as a perineuronal nets (PNNs)-type deposition in the brainstem and cerebellum thereby playing a key role in the formation and structural organization of PNNs. Contributes to the formation and transmission of inhibitory GABAergic synapses between Purkinje cells and deep cerebellar nuclei neurons. The chain is Hyaluronan and proteoglycan link protein 4 (Hapln4) from Mus musculus (Mouse).